The following is a 180-amino-acid chain: Nucleoside triphosphate/diphosphate phosphatase (180 aa).

Catalysis depends on R26, which acts as the Proton donor. Positions 90, 106, 108, 110, 123, and 126 each coordinate Mg(2+).

The protein belongs to the Ntdp family. Requires Mg(2+) as cofactor.

It carries out the reaction a ribonucleoside 5'-triphosphate + H2O = a ribonucleoside 5'-diphosphate + phosphate + H(+). It catalyses the reaction a ribonucleoside 5'-diphosphate + H2O = a ribonucleoside 5'-phosphate + phosphate + H(+). Has nucleoside phosphatase activity towards nucleoside triphosphates and nucleoside diphosphates. This Staphylococcus epidermidis (strain ATCC 35984 / DSM 28319 / BCRC 17069 / CCUG 31568 / BM 3577 / RP62A) protein is Nucleoside triphosphate/diphosphate phosphatase.